A 225-amino-acid chain; its full sequence is 7-cyano-7-deazaguanine synthase (225 aa).

9-19 provides a ligand contact to ATP; the sequence is YSGGLDSTTCL. Zn(2+) is bound by residues C188, C198, C201, and C204.

The protein belongs to the QueC family. Zn(2+) serves as cofactor.

The enzyme catalyses 7-carboxy-7-deazaguanine + NH4(+) + ATP = 7-cyano-7-deazaguanine + ADP + phosphate + H2O + H(+). The protein operates within purine metabolism; 7-cyano-7-deazaguanine biosynthesis. Its function is as follows. Catalyzes the ATP-dependent conversion of 7-carboxy-7-deazaguanine (CDG) to 7-cyano-7-deazaguanine (preQ(0)). This is 7-cyano-7-deazaguanine synthase from Geobacter sp. (strain M21).